Reading from the N-terminus, the 315-residue chain is Acetyl-coenzyme A carboxylase carboxyl transferase subunit alpha (315 aa).

The region spanning 39 to 293 (RLQDKSSTLT…RADLIEQLDM (255 aa)) is the CoA carboxyltransferase C-terminal domain.

Belongs to the AccA family. In terms of assembly, acetyl-CoA carboxylase is a heterohexamer composed of biotin carboxyl carrier protein (AccB), biotin carboxylase (AccC) and two subunits each of ACCase subunit alpha (AccA) and ACCase subunit beta (AccD).

It localises to the cytoplasm. The catalysed reaction is N(6)-carboxybiotinyl-L-lysyl-[protein] + acetyl-CoA = N(6)-biotinyl-L-lysyl-[protein] + malonyl-CoA. The protein operates within lipid metabolism; malonyl-CoA biosynthesis; malonyl-CoA from acetyl-CoA: step 1/1. Functionally, component of the acetyl coenzyme A carboxylase (ACC) complex. First, biotin carboxylase catalyzes the carboxylation of biotin on its carrier protein (BCCP) and then the CO(2) group is transferred by the carboxyltransferase to acetyl-CoA to form malonyl-CoA. The protein is Acetyl-coenzyme A carboxylase carboxyl transferase subunit alpha of Pseudomonas entomophila (strain L48).